The following is a 443-amino-acid chain: ATP-dependent protease ATPase subunit HslU (443 aa).

ATP is bound by residues I18, 60-65, D256, E321, and R393; that span reads GVGKTE.

Belongs to the ClpX chaperone family. HslU subfamily. As to quaternary structure, a double ring-shaped homohexamer of HslV is capped on each side by a ring-shaped HslU homohexamer. The assembly of the HslU/HslV complex is dependent on binding of ATP.

It is found in the cytoplasm. ATPase subunit of a proteasome-like degradation complex; this subunit has chaperone activity. The binding of ATP and its subsequent hydrolysis by HslU are essential for unfolding of protein substrates subsequently hydrolyzed by HslV. HslU recognizes the N-terminal part of its protein substrates and unfolds these before they are guided to HslV for hydrolysis. This chain is ATP-dependent protease ATPase subunit HslU, found in Buchnera aphidicola subsp. Acyrthosiphon pisum (strain 5A).